A 125-amino-acid polypeptide reads, in one-letter code: Small ribosomal subunit protein bS6 (125 aa).

The tract at residues 96–125 is disordered; that stretch reads ETGASSMMKTVEREEARKASQAEFAAANER. The span at 105–115 shows a compositional bias: basic and acidic residues; the sequence is TVEREEARKAS.

Belongs to the bacterial ribosomal protein bS6 family.

In terms of biological role, binds together with bS18 to 16S ribosomal RNA. The sequence is that of Small ribosomal subunit protein bS6 from Paracidovorax citrulli (strain AAC00-1) (Acidovorax citrulli).